A 194-amino-acid polypeptide reads, in one-letter code: Imidazoleglycerol-phosphate dehydratase (194 aa).

This sequence belongs to the imidazoleglycerol-phosphate dehydratase family.

Its subcellular location is the cytoplasm. It carries out the reaction D-erythro-1-(imidazol-4-yl)glycerol 3-phosphate = 3-(imidazol-4-yl)-2-oxopropyl phosphate + H2O. Its pathway is amino-acid biosynthesis; L-histidine biosynthesis; L-histidine from 5-phospho-alpha-D-ribose 1-diphosphate: step 6/9. This chain is Imidazoleglycerol-phosphate dehydratase, found in Bacillus velezensis (strain DSM 23117 / BGSC 10A6 / LMG 26770 / FZB42) (Bacillus amyloliquefaciens subsp. plantarum).